We begin with the raw amino-acid sequence, 435 residues long: Ras association domain-containing protein 9 (435 aa).

Positions 1 to 22 are disordered; it reads MAPFGRNLLKTRHKNRSPTKDM. A Ras-associating domain is found at 25 to 119; it reads EEKEIVVWVC…MQFVLVKADA (95 aa). The stretch at 195-290 forms a coiled coil; the sequence is HTIHQQVKRM…DKLSAEIEKE (96 aa). Residues 380–435 are disordered; the sequence is NRAKESEVPSSNGEIPPFTQRVFSNYTNDTDSDTGISSNHSQDSETTVGDVVLLST. Over residues 400 to 426 the composition is skewed to polar residues; the sequence is RVFSNYTNDTDSDTGISSNHSQDSETT.

As to quaternary structure, interacts with PAM.

The protein resides in the endosome. Its function is as follows. May play a role in regulating vesicuar trafficking in cells. The protein is Ras association domain-containing protein 9 (RASSF9) of Homo sapiens (Human).